Consider the following 274-residue polypeptide: Kit ligand (274 aa).

An N-terminal signal peptide occupies residues 1–25 (MKKTQTWIITCIYLQLLLFNPLVKT). Residues 26-215 (KGICGKRVTD…SNSIGDSNLQ (190 aa)) lie on the Extracellular side of the membrane. 2 disulfides stabilise this stretch: C29-C114 and C68-C164. N-linked (GlcNAc...) asparagine glycosylation is found at N90, N97, N145, and N196. Residues 216–238 (WAAMALPAFFSLVIGFAFGALYW) traverse the membrane as a helical segment. Residues 239–274 (KKKQPNLTRTVENIQINEEDNEISMLQEKEREFQEV) are Cytoplasmic-facing.

It belongs to the SCF family. Homodimer, non-covalently linked. Post-translationally, a soluble form is produced by proteolytic processing of the extracellular domain.

Its subcellular location is the cytoplasm. The protein resides in the cytoskeleton. The protein localises to the cell membrane. It is found in the cell projection. It localises to the lamellipodium. Its subcellular location is the filopodium. The protein resides in the secreted. In terms of biological role, stimulates the proliferation of mast cells. Able to augment the proliferation of both myeloid and lymphoid hematopoietic progenitors in bone marrow culture. Also mediates cell-cell adhesion. Acts synergistically with other cytokines, probably interleukins. The chain is Kit ligand (KITLG) from Canis lupus familiaris (Dog).